The following is a 181-amino-acid chain: ATP-dependent protease subunit HslV (181 aa).

Residue Thr7 is part of the active site. Ala162, Cys165, and Thr168 together coordinate Na(+).

The protein belongs to the peptidase T1B family. HslV subfamily. A double ring-shaped homohexamer of HslV is capped on each side by a ring-shaped HslU homohexamer. The assembly of the HslU/HslV complex is dependent on binding of ATP.

It localises to the cytoplasm. The enzyme catalyses ATP-dependent cleavage of peptide bonds with broad specificity.. Allosterically activated by HslU binding. In terms of biological role, protease subunit of a proteasome-like degradation complex believed to be a general protein degrading machinery. The chain is ATP-dependent protease subunit HslV from Coxiella burnetii (strain Dugway 5J108-111).